The chain runs to 385 residues: 1-deoxy-D-xylulose 5-phosphate reductoisomerase (385 aa).

Residues Thr-10, Gly-11, Ser-12, Ile-13, and Asn-124 each contribute to the NADPH site. Lys-125 is a binding site for 1-deoxy-D-xylulose 5-phosphate. Glu-126 serves as a coordination point for NADPH. Residue Asp-150 participates in Mn(2+) binding. 1-deoxy-D-xylulose 5-phosphate contacts are provided by Ser-151, Glu-152, Ser-176, and His-199. Glu-152 is a binding site for Mn(2+). Residue Gly-205 coordinates NADPH. Ser-212, Asn-217, Lys-218, and Glu-221 together coordinate 1-deoxy-D-xylulose 5-phosphate. Glu-221 contacts Mn(2+).

It belongs to the DXR family. Mg(2+) is required as a cofactor. The cofactor is Mn(2+).

The catalysed reaction is 2-C-methyl-D-erythritol 4-phosphate + NADP(+) = 1-deoxy-D-xylulose 5-phosphate + NADPH + H(+). Its pathway is isoprenoid biosynthesis; isopentenyl diphosphate biosynthesis via DXP pathway; isopentenyl diphosphate from 1-deoxy-D-xylulose 5-phosphate: step 1/6. In terms of biological role, catalyzes the NADPH-dependent rearrangement and reduction of 1-deoxy-D-xylulose-5-phosphate (DXP) to 2-C-methyl-D-erythritol 4-phosphate (MEP). The polypeptide is 1-deoxy-D-xylulose 5-phosphate reductoisomerase (Clostridium kluyveri (strain NBRC 12016)).